Reading from the N-terminus, the 3530-residue chain is Unconventional myosin-XV (3530 aa).

Disordered regions lie at residues 1–46 (MAKE…RTPK), 615–710 (AGMD…PAHV), and 730–1057 (EVPP…QKTL). The span at 663–681 (PPVPPRPPSSGPPPAPPLS) shows a compositional bias: pro residues. Low complexity-rich tracts occupy residues 682-693 (PALSGLPRPASP), 753-763 (AAFGFPGASPR), and 823-835 (SPAPRRAAGRLGP). Residues 836-850 (PGSPLPGSPRPPSPP) show a composition bias toward pro residues. The segment covering 859 to 869 (RSSLNLPSRLP) has biased composition (low complexity). Residues 903 to 913 (PLEHRESPREP) are compositionally biased toward basic and acidic residues. Residues 1027–1038 (TKPPTPAPPKDV) show a composition bias toward pro residues. The region spanning 1222–1899 (DGVEDMTQLE…LYQLLESMRE (678 aa)) is the Myosin motor domain. Residue 1315–1322 (GESGSGKT) participates in ATP binding. Positions 1323 to 1350 (EATKLILRYLAAMNQKREVMQQIKILEA) form a coiled coil. The segment at 1792 to 1799 (FMRCLKPN) is actin-binding. The neck or regulatory domain stretch occupies residues 1888–2029 (EHLYQLLESM…AQVPQVAPVR (142 aa)). IQ domains follow at residues 1902 to 1924 (LNLAALTLQRCLRGFFIKRRFRS), 1925 to 1954 (LRHKIILLQSRARGYLARQRYQQMRRSLVK), and 1955 to 1976 (FRSLVHAYVSRRRYLKLRAEWR). The interval 2030 to 3530 (TPRLQAEPRV…TLPPSEITLL (1501 aa)) is tail. Residues 2065–2217 (MLTVPLRTPL…PTQLEWTATY (153 aa)) enclose the MyTH4 1 domain. Disordered regions lie at residues 2311–2381 (AASR…GEPA), 2414–2446 (YRMKGGGQPGGGSSSGTEDTPRRPPEPKPIPGL), 2490–2509 (AEKPPAPEAQPTSVGTGPPA), and 2644–2665 (TSAPRPSMAPTSALPSRSLEPP). Residues 2349–2371 (GYSSHNQDGTNGETEAQRGTATH) show a composition bias toward polar residues. Residues 2417 to 2427 (KGGGQPGGGSS) are compositionally biased toward gly residues. The 87-residue stretch at 2867-2953 (KDSDYVVAVR…PSELVQPAAA (87 aa)) folds into the SH3 domain. One can recognise a MyTH4 2 domain in the interval 3050-3204 (FTKTPLQESL…PSSIELRAML (155 aa)). Residues 3209–3530 (SKRQLFLLPG…TLPPSEITLL (322 aa)) enclose the FERM domain.

This sequence belongs to the TRAFAC class myosin-kinesin ATPase superfamily. Myosin family. As to quaternary structure, interacts with the third PDZ domain of WHRN which is necessary for localization of WHRN to stereocilium tips. Interacts with EPS8. Interacts with FASLG. Highly expressed in pituitary. Also expressed at lower levels in adult brain, kidney, liver, lung, pancreas, placenta and skeletal muscle. Not expressed in brain. In the pituitary, highly expressed in anterior gland cells.

It localises to the cell projection. It is found in the stereocilium. The protein resides in the cytoplasm. The protein localises to the cytoskeleton. Functionally, myosins are actin-based motor molecules with ATPase activity. Unconventional myosins serve in intracellular movements. Their highly divergent tails are presumed to bind to membranous compartments, which would be moved relative to actin filaments. Required for the arrangement of stereocilia in mature hair bundles. The protein is Unconventional myosin-XV (MYO15A) of Homo sapiens (Human).